A 483-amino-acid polypeptide reads, in one-letter code: Phosphoenolpyruvate carboxylase (483 aa).

Residues 1–20 (MKVPRCMSTQHPDNVNPPFF) form a disordered region.

It belongs to the PEPCase type 2 family. In terms of assembly, homotetramer. It depends on Mg(2+) as a cofactor.

The catalysed reaction is oxaloacetate + phosphate = phosphoenolpyruvate + hydrogencarbonate. Its activity is regulated as follows. Inhibited by NaCl, KCl, ATP, ADP, GTP and aspartate. Unlike E.coli, not regulated by acetyl-CoA. Functionally, catalyzes the irreversible beta-carboxylation of phosphoenolpyruvate (PEP) to form oxaloacetate (OAA), a four-carbon dicarboxylic acid source for the tricarboxylic acid cycle. The chain is Phosphoenolpyruvate carboxylase (ppcA) from Methanothermobacter thermautotrophicus (strain ATCC 29096 / DSM 1053 / JCM 10044 / NBRC 100330 / Delta H) (Methanobacterium thermoautotrophicum).